The chain runs to 150 residues: Urease accessory protein UreE (150 aa).

It belongs to the UreE family.

The protein localises to the cytoplasm. In terms of biological role, involved in urease metallocenter assembly. Binds nickel. Probably functions as a nickel donor during metallocenter assembly. The chain is Urease accessory protein UreE from Staphylococcus epidermidis (strain ATCC 35984 / DSM 28319 / BCRC 17069 / CCUG 31568 / BM 3577 / RP62A).